Consider the following 429-residue polypeptide: Phosphomethylpyrimidine synthase 1 (429 aa).

Substrate contacts are provided by residues asparagine 65, methionine 94, tyrosine 123, histidine 162, 184–186 (SRG), 225–228 (DGLR), and glutamate 264. A Zn(2+)-binding site is contributed by histidine 268. Tyrosine 291 lines the substrate pocket. Histidine 332 is a binding site for Zn(2+). [4Fe-4S] cluster-binding residues include cysteine 408, cysteine 411, and cysteine 415.

The protein belongs to the ThiC family. It depends on [4Fe-4S] cluster as a cofactor.

It carries out the reaction 5-amino-1-(5-phospho-beta-D-ribosyl)imidazole + S-adenosyl-L-methionine = 4-amino-2-methyl-5-(phosphooxymethyl)pyrimidine + CO + 5'-deoxyadenosine + formate + L-methionine + 3 H(+). It participates in cofactor biosynthesis; thiamine diphosphate biosynthesis. Functionally, catalyzes the synthesis of the hydroxymethylpyrimidine phosphate (HMP-P) moiety of thiamine from aminoimidazole ribotide (AIR) in a radical S-adenosyl-L-methionine (SAM)-dependent reaction. The sequence is that of Phosphomethylpyrimidine synthase 1 from Methanosphaera stadtmanae (strain ATCC 43021 / DSM 3091 / JCM 11832 / MCB-3).